A 569-amino-acid polypeptide reads, in one-letter code: Urease subunit alpha (569 aa).

In terms of domain architecture, Urease spans 132–569 (GGIDSHIHFI…LPLAQRYFLF (438 aa)). Ni(2+) contacts are provided by His-137, His-139, and Lys-220. Lys-220 is subject to N6-carboxylysine. His-222 serves as a coordination point for substrate. His-249 and His-275 together coordinate Ni(2+). The active-site Proton donor is His-323. Asp-363 serves as a coordination point for Ni(2+).

This sequence belongs to the metallo-dependent hydrolases superfamily. Urease alpha subunit family. As to quaternary structure, heterotrimer of UreA (gamma), UreB (beta) and UreC (alpha) subunits. Three heterotrimers associate to form the active enzyme. It depends on Ni cation as a cofactor. In terms of processing, carboxylation allows a single lysine to coordinate two nickel ions.

The protein resides in the cytoplasm. It catalyses the reaction urea + 2 H2O + H(+) = hydrogencarbonate + 2 NH4(+). It functions in the pathway nitrogen metabolism; urea degradation; CO(2) and NH(3) from urea (urease route): step 1/1. This chain is Urease subunit alpha, found in Dechloromonas aromatica (strain RCB).